A 954-amino-acid chain; its full sequence is Leucine--tRNA ligase (954 aa).

The 'HIGH' region signature appears at 67–78 (PYPSGAGLHVGH). Residues 729–733 (KMGKS) carry the 'KMSKS' region motif. Lys-732 is an ATP binding site.

It belongs to the class-I aminoacyl-tRNA synthetase family.

The protein localises to the cytoplasm. The enzyme catalyses tRNA(Leu) + L-leucine + ATP = L-leucyl-tRNA(Leu) + AMP + diphosphate. In Salinispora tropica (strain ATCC BAA-916 / DSM 44818 / JCM 13857 / NBRC 105044 / CNB-440), this protein is Leucine--tRNA ligase.